The sequence spans 131 residues: Peptide methionine sulfoxide reductase MsrB (131 aa).

The MsrB domain maps to 9–131; that stretch reads DEDWKKELTP…NSASLKFQKE (123 aa). Residues Cys-48, Cys-51, Cys-97, and Cys-100 each coordinate Zn(2+). Catalysis depends on Cys-120, which acts as the Nucleophile.

This sequence belongs to the MsrB Met sulfoxide reductase family. It depends on Zn(2+) as a cofactor.

The catalysed reaction is L-methionyl-[protein] + [thioredoxin]-disulfide + H2O = L-methionyl-(R)-S-oxide-[protein] + [thioredoxin]-dithiol. The chain is Peptide methionine sulfoxide reductase MsrB from Leptospira interrogans serogroup Icterohaemorrhagiae serovar Lai (strain 56601).